The primary structure comprises 382 residues: MNTPPFVCWIFCKVIDNFGDIGVSLRLARVLHRELGWQVHLWTDDVSALRALCPDLPDVPCVHQDIHVRTWHSDAADIDTAPVPDAVIETFACDLPENVLHIIRRHKPLWLNWEYLSAEESNERLHLMPSPQEGVQKYFWFMGFSEKSGGLIRERDYRDAVRFDTEALRQRLMLPEKNAPEWLLFGYRSDVWAKWLEMWQQAGSPMTLLLAGAQIIDSLKQSGIIPQNALQNDGDVFQTASVRLVKIPFVPQQDFDQLLHLADCAVIRGEDSFVRAQLAGKPFFWHIYPQDEHVHLDKLHAFWDKAHGFYTPETASAHRCLSDDLNGGEALSATQRLECWQILQQHQNGWRQGAGAWSRYLFGQPSASEKLAAFVSKHQKIR.

Residues 17–20 (NFGD), Tyr187, Gln252, and 268–272 (RGEDS) contribute to the dTDP-beta-L-rhamnose site. The active-site Proton acceptor is Asp20. Glu270 is a catalytic residue.

It belongs to the glycosyltransferase 104 family.

The enzyme catalyses dTDP-beta-L-rhamnose + L-arginyl-[protein] = N(omega)-(alpha-L-rhamnosyl)-L-arginyl-[protein] + dTDP + H(+). Its function is as follows. Protein-arginine rhamnosyltransferase that catalyzes the transfer of a single rhamnose to elongation factor P (EF-P) on 'Lys-32', a modification required for EF-P-dependent rescue of polyproline stalled ribosomes. The sequence is that of Protein-arginine rhamnosyltransferase from Neisseria meningitidis.